Here is a 343-residue protein sequence, read N- to C-terminus: MGLLERLRKEWFIIGIILVIVAAKLEPTIGEKGGPLKPEITITYIAVSAIFFNSGLSLKTEELTNALMHVKLHLFVQLFTLVFFPTAIWIFLQVLSLTPINEWLLKGLQTVSCMPPPVSSAVILTKAVGGNEAAAIFNSAFGSFLGIVVTPLLLLLFLGSSSSVPFTSIFSQLFMTVVVPLIIGQIVRRYIKDWLERKKPPFGAISSCVLLMIIYTTFCDTFSNPNIDLDTFSLVVIVFIIFFIQLAFMLLTFLFSTSKNSGFTPADTVAIVFCSTHKSLTLGIPMLKIVFAGYEHLSLISVPLLIYHPAQILLGSVLVPTIKSWMLSRRKALKLTRQPKIPL.

The Cytoplasmic portion of the chain corresponds to 1 to 9; the sequence is MGLLERLRK. A helical membrane pass occupies residues 10–30; sequence EWFIIGIILVIVAAKLEPTIG. Residues 31-37 lie on the Extracellular side of the membrane; that stretch reads EKGGPLK. Residues 38–58 form a helical membrane-spanning segment; the sequence is PEITITYIAVSAIFFNSGLSL. The Cytoplasmic segment spans residues 59–71; that stretch reads KTEELTNALMHVK. Residues 72 to 92 form a helical membrane-spanning segment; it reads LHLFVQLFTLVFFPTAIWIFL. Topologically, residues 93–116 are extracellular; it reads QVLSLTPINEWLLKGLQTVSCMPP. The chain crosses the membrane as a helical span at residues 117–137; that stretch reads PVSSAVILTKAVGGNEAAAIF. Position 138 (Asn-138) is a topological domain, cytoplasmic. The helical transmembrane segment at 139–159 threads the bilayer; the sequence is SAFGSFLGIVVTPLLLLLFLG. The Extracellular portion of the chain corresponds to 160-163; the sequence is SSSS. A helical membrane pass occupies residues 164–184; the sequence is VPFTSIFSQLFMTVVVPLIIG. Residues 185–201 lie on the Cytoplasmic side of the membrane; the sequence is QIVRRYIKDWLERKKPP. A helical transmembrane segment spans residues 202–222; sequence FGAISSCVLLMIIYTTFCDTF. At 223-234 the chain is on the extracellular side; it reads SNPNIDLDTFSL. A helical transmembrane segment spans residues 235 to 255; the sequence is VVIVFIIFFIQLAFMLLTFLF. At 256-270 the chain is on the cytoplasmic side; the sequence is STSKNSGFTPADTVA. A helical transmembrane segment spans residues 271–291; sequence IVFCSTHKSLTLGIPMLKIVF. Residues 292–298 are Extracellular-facing; the sequence is AGYEHLS. Residues 299 to 319 form a helical membrane-spanning segment; the sequence is LISVPLLIYHPAQILLGSVLV. Residues 320 to 343 lie on the Cytoplasmic side of the membrane; it reads PTIKSWMLSRRKALKLTRQPKIPL.

This sequence belongs to the bile acid:sodium symporter (BASS) (TC 2.A.28) family.

It localises to the cell membrane. Its subcellular location is the endoplasmic reticulum membrane. It is found in the golgi apparatus membrane. Functionally, involved in teeth and skeletal development. Has an essential role in the biosynthesis and trafficking of glycosaminoglycans and glycoproteins to produce a proper functioning extracellular matrix. Required for extracellular matrix mineralization. Also involved in the regulation of cellular calcium homeostasis. Does not show transport activity towards bile acids or steroid sulfates. In Xenopus laevis (African clawed frog), this protein is Sodium/bile acid cotransporter 7-B (slc10a7-b).